The sequence spans 1157 residues: Probable ATP-dependent RNA helicase DHX37 (1157 aa).

Positions 1–10 are enriched in basic residues; sequence MGKLRRRYNI. 2 disordered regions span residues 1–77 and 116–225; these read MGKL…KKEK and TSKL…AAPP. The span at 21-30 shows a compositional bias: pro residues; that stretch reads SKGPPEPPPV. A compositionally biased stretch (acidic residues) spans 159 to 184; sequence AEEEEEEEEESESELEEESELDEDPA. 2 stretches are compositionally biased toward pro residues: residues 198 to 208 and 216 to 225; these read PLPPAPAPSSQ and VPPPPAAAPP. In terms of domain architecture, Helicase ATP-binding spans 262 to 429; that stretch reads MEAVAEHPIV…PRLFAKPPPV (168 aa). Residue 275 to 282 participates in ATP binding; the sequence is GETGSGKT. A DEAH box motif is present at residues 372–375; sequence DEAH. One can recognise a Helicase C-terminal domain in the interval 459–716; it reads KVCKIHRMLP…DLILQMKALN (258 aa). Disordered regions lie at residues 494–523 and 542–584; these read PPSR…SRAR and VLPA…QPDA. Basic and acidic residues predominate over residues 499–515; it reads RPQEKDDDQKDSVEEMR. A compositionally biased stretch (acidic residues) spans 547 to 571; it reads EGDEDREAEVDEEEGALDSDLDLDL.

This sequence belongs to the DEAD box helicase family. DEAH subfamily. In terms of assembly, part of the small subunit (SSU) processome, composed of more than 70 proteins and the RNA chaperone small nucleolar RNA (snoRNA) U3. Interacts with UTP14A. In terms of tissue distribution, expressed in the fallopian tube, ovary, uterus and testis. Also expressed in the brain.

It localises to the nucleus. Its subcellular location is the nucleolus. The protein resides in the cytoplasm. The protein localises to the nucleus membrane. It carries out the reaction ATP + H2O = ADP + phosphate + H(+). ATP-binding RNA helicase that plays a role in maturation of the small ribosomal subunit in ribosome biogenesis. Required for the release of the U3 snoRNP from pre-ribosomal particles. Part of the small subunit (SSU) processome, first precursor of the small eukaryotic ribosomal subunit. During the assembly of the SSU processome in the nucleolus, many ribosome biogenesis factors, an RNA chaperone and ribosomal proteins associate with the nascent pre-rRNA and work in concert to generate RNA folding, modifications, rearrangements and cleavage as well as targeted degradation of pre-ribosomal RNA by the RNA exosome. Plays a role in early testis development. Probably also plays a role in brain development. The polypeptide is Probable ATP-dependent RNA helicase DHX37 (Homo sapiens (Human)).